Here is a 443-residue protein sequence, read N- to C-terminus: MSNMTPKNIVKELDSHIIGQHDAKKAVAIALRNRWRRMKLDDSLRHEVTPKNILMIGPTGVGKTEIARRLAKLAKAPFIKVEATKFTEVGYVGKEVDSIIRDLTDASVKMIRLQSIEKNRFRAEELAEERVLDVLIPSVKNDWGNSENKKEPSKTRQNFRKKLKTKELDDKEIEINLASTPIGVEIMAPPGMEEMTSQLQSMFKNLAGQKQKPRKIKIKEAMRLLIEEESAKLINLEEIKEKAVEAVEQNGIVFIDEIDKICKRGEISGPDVSREGVQRDLLPLVEGCTVSTKHGMVKTDHILFIASGAFQVANPSDLIPELQGRLPIRVELSALTIEDFEKILTEPSASLTKQYSALMATEGVIISFTQEGIKKIAEAACQVNDSTENIGARRLHTILERLMEEVSYNASEWNGKKINIDADYVSNHLDKLVSDEDLSRFIL.

Residues I18, 60–65, D256, E321, and R393 each bind ATP; that span reads GVGKTE.

The protein belongs to the ClpX chaperone family. HslU subfamily. As to quaternary structure, a double ring-shaped homohexamer of HslV is capped on each side by a ring-shaped HslU homohexamer. The assembly of the HslU/HslV complex is dependent on binding of ATP.

The protein localises to the cytoplasm. Functionally, ATPase subunit of a proteasome-like degradation complex; this subunit has chaperone activity. The binding of ATP and its subsequent hydrolysis by HslU are essential for unfolding of protein substrates subsequently hydrolyzed by HslV. HslU recognizes the N-terminal part of its protein substrates and unfolds these before they are guided to HslV for hydrolysis. This Wigglesworthia glossinidia brevipalpis protein is ATP-dependent protease ATPase subunit HslU.